A 210-amino-acid polypeptide reads, in one-letter code: Uracil phosphoribosyltransferase (210 aa).

Residues Arg78, Arg103, and 130-138 contribute to the 5-phospho-alpha-D-ribose 1-diphosphate site; that span reads DPMLATGGT. Uracil is bound by residues Ile193 and 198 to 200; that span reads GDA. Asp199 contacts 5-phospho-alpha-D-ribose 1-diphosphate.

The protein belongs to the UPRTase family. Requires Mg(2+) as cofactor.

The enzyme catalyses UMP + diphosphate = 5-phospho-alpha-D-ribose 1-diphosphate + uracil. The protein operates within pyrimidine metabolism; UMP biosynthesis via salvage pathway; UMP from uracil: step 1/1. Allosterically activated by GTP. Functionally, catalyzes the conversion of uracil and 5-phospho-alpha-D-ribose 1-diphosphate (PRPP) to UMP and diphosphate. The protein is Uracil phosphoribosyltransferase of Stenotrophomonas maltophilia (strain R551-3).